The following is a 512-amino-acid chain: 2,3-bisphosphoglycerate-independent phosphoglycerate mutase (512 aa).

Residues Asp-11 and Ser-61 each contribute to the Mn(2+) site. Catalysis depends on Ser-61, which acts as the Phosphoserine intermediate. Substrate contacts are provided by residues His-122, Arg-152 to Asp-153, Arg-184, Arg-190, Arg-259 to Arg-262, and Lys-332. Positions 399, 403, 440, 441, and 459 each coordinate Mn(2+).

This sequence belongs to the BPG-independent phosphoglycerate mutase family. As to quaternary structure, monomer. The cofactor is Mn(2+).

It catalyses the reaction (2R)-2-phosphoglycerate = (2R)-3-phosphoglycerate. Its pathway is carbohydrate degradation; glycolysis; pyruvate from D-glyceraldehyde 3-phosphate: step 3/5. Catalyzes the interconversion of 2-phosphoglycerate and 3-phosphoglycerate. In Francisella tularensis subsp. tularensis (strain FSC 198), this protein is 2,3-bisphosphoglycerate-independent phosphoglycerate mutase.